The primary structure comprises 706 residues: SPX domain-containing membrane protein Os09g0521800 (706 aa).

Positions 2–145 constitute an SPX domain; the sequence is VNFSNKLTKD…GYKFTDYYVR (144 aa). 6 helical membrane passes run 251-271, 281-301, 318-338, 340-359, 378-398, and 414-434; these read MSLV…YIVV, LGAA…AQVF, LLFS…AFDL, SLTI…ARAV, AAFV…AGLL, and LPGW…WILF. Residues 475–498 are disordered; sequence SEQDEEDDNGDEEHNETLSSSTTT. Over residues 476–488 the composition is skewed to acidic residues; the sequence is EQDEEDDNGDEEH. Helical transmembrane passes span 520–540, 554–574, 583–603, 611–631, and 678–698; these read LLIY…SSVV, VFLA…GTYI, ILVA…KLTV, VCSA…NLSL, and LLNA…AATL.

The protein belongs to the major facilitator superfamily.

The protein resides in the membrane. The sequence is that of SPX domain-containing membrane protein Os09g0521800 from Oryza sativa subsp. japonica (Rice).